A 2530-amino-acid chain; its full sequence is Agglutinin-like protein 2 (2530 aa).

The first 17 residues, 1–17, serve as a signal peptide directing secretion; sequence MLLQFLLLSLCVSVATA. 4 cysteine pairs are disulfide-bonded: cysteine 73–cysteine 150, cysteine 96–cysteine 112, cysteine 205–cysteine 297, and cysteine 227–cysteine 256. 2 N-linked (GlcNAc...) asparagine glycosylation sites follow: asparagine 253 and asparagine 315. ALS repeat units lie at residues 364–395, 400–431, 437–468, 473–504, 509–540, and 545–576; these read TTITTSYVGVTTSYSTKTAPIGETATVIVDVP, TTVTSEWTGTITTTTTRTNPTDSIDTVVVQVP, VTTTEYWSQSYATTTTVTAPPGGTDSVIIREP, VTTTEYWSQSYATSSTVTAPPGGTDTVIIREP, and VTTTEYWSQSFATTTTITAPPGETDTVLIREP. Residue asparagine 578 is glycosylated (N-linked (GlcNAc...) asparagine). An ALS 7 repeat occupies 581–612; the sequence is VTTTEYWSQSYVTTSTITAPPGGTDTVIIREP. A glycan (N-linked (GlcNAc...) asparagine) is linked at asparagine 614. ALS repeat units follow at residues 617 to 648, 653 to 684, 689 to 720, 725 to 756, 761 to 792, 797 to 828, and 833 to 864; these read VTTTEYWSQSYATTTTVTAPPGGTDTVIIREP, VTTTEYWSQSYATTTTVTGPPGGTDTVIIREP, and VTTTEYWSQSYATTTTVTAPPGGTATVIIREP. A glycan (N-linked (GlcNAc...) asparagine) is linked at asparagine 866. ALS repeat units follow at residues 869–900, 905–936, 941–972, and 977–1008; these read VTTTEYWSQSYATTTTVTGPPGGTDTVIIREP and VTTTEYWSQSYATTTTVTAPPGGTATVIIREP. Low complexity predominate over residues 954–967; it reads TTTVTGPPGGTDTV. The disordered stretch occupies residues 954 to 975; it reads TTTVTGPPGGTDTVIIREPPNP. Asparagine 1010 carries an N-linked (GlcNAc...) asparagine glycan. ALS repeat units lie at residues 1013 to 1044, 1049 to 1077, 1085 to 1116, and 1121 to 1152; these read VTTTEYWSQSYATTTTVTGPPGGTDTVIIREP, VTTTEYWSQSYATTTTVTAPPGGTATVII, and VTTTEYWSQSYATTTTVTAPPGGTATVIIREP. N-linked (GlcNAc...) asparagine glycosylation is present at asparagine 1154. ALS repeat units lie at residues 1157 to 1188, 1193 to 1224, 1229 to 1260, 1265 to 1296, 1301 to 1332, and 1337 to 1368; these read VTTTEYWSQSYATTTTVTGPPGGTDTVIIREP, VTTTEYWSQSFATTTTVTAPPGGTDSVIIREP, VTTTEYWSQSYATTTTVTAPPGGTDSVIIREP, and VTTTEYWSQSYATTTTVTAPPGGTATVIIREP. A glycan (N-linked (GlcNAc...) asparagine) is linked at asparagine 1370. The stretch at 1373 to 1404 is one ALS 29 repeat; that stretch reads VTTTEYWSQSYATTTTVTAPPGGTATVIIREP. The N-linked (GlcNAc...) asparagine glycan is linked to asparagine 1406. The stretch at 1409 to 1440 is one ALS 30 repeat; it reads VTTTEYWSQSYATTTTITAPPGDTDTVIIREP. N-linked (GlcNAc...) asparagine glycosylation occurs at asparagine 1442. ALS repeat units lie at residues 1445–1476 and 1481–1512; these read VTTTEYWSQSFATTTTVTAPPGGTDSVIIREP and VTTTEYWSQSYATTTTVTAPPGGTATVIIREP. A glycan (N-linked (GlcNAc...) asparagine) is linked at asparagine 1514. The stretch at 1517–1548 is one ALS 33 repeat; that stretch reads VTTTEYWSQSYATTTTVTAPPGGTATVIIREP. Asparagine 1550 carries an N-linked (GlcNAc...) asparagine glycan. Residues 1553-1584 form an ALS 34 repeat; it reads VTTTEYWSQSYATTTTITAPPGDTDTVIIREP. A glycan (N-linked (GlcNAc...) asparagine) is linked at asparagine 1586. An ALS 35 repeat occupies 1589-1620; it reads VTTTEYWSQSYATTTTVTAPPGGTDTVIIREP. Asparagine 1622 carries an N-linked (GlcNAc...) asparagine glycan. An ALS 36 repeat occupies 1625-1656; sequence VTTTEYWSQSYATTTTVTAPPGGTATVIIREP. Asparagine 1658 is a glycosylation site (N-linked (GlcNAc...) asparagine). ALS repeat units lie at residues 1661–1692 and 1697–1728; these read VTTTEYWSQSYATTTTVTGPPGSTDTVIIREP and VTTTEYWSQSYATTTTVTAPPGGTATVIIREP. N-linked (GlcNAc...) asparagine glycosylation is present at asparagine 1730. An ALS 39 repeat occupies 1733–1764; the sequence is VTTTEYWSQSYATTTTVTAPPGGTDTVIIREP. A glycan (N-linked (GlcNAc...) asparagine) is linked at asparagine 1766. 2 ALS repeats span residues 1769-1800 and 1805-1836; these read VTTTEYWSQSYATTTTVTAPPGGTDTVIIREP and VTTTEYWSQSYATTTTVTAPPGGTATVIIREP. The N-linked (GlcNAc...) asparagine glycan is linked to asparagine 1838. 2 ALS repeats span residues 1841–1872 and 1877–1907; these read VTTTEYWSESYATTTTVTGPPGGTDVILIREP and VTTTEYWSESYATTTTITAPPGATDSVRIRE. Asparagine 1910 carries an N-linked (GlcNAc...) asparagine glycan. 2 ALS repeats span residues 1913–1944 and 1949–1980; these read VTTTEYWSQSYATTTTVTAPPGGTDSVIIREP and VTTTEYWSQSYATTTTVTAPPGGTATVIIREP. An N-linked (GlcNAc...) asparagine glycan is attached at asparagine 1982. 3 ALS repeats span residues 1985 to 2016, 2021 to 2052, and 2057 to 2088; these read VTTTEYWSQSYATTTTVTAPPGGTDTVIIREP and VTTTEYWSQSYATTTTVTAPPGGTATVIIREP. Residue asparagine 2090 is glycosylated (N-linked (GlcNAc...) asparagine). ALS repeat units lie at residues 2093-2124 and 2129-2157; these read VTTTEYWSQSYATTTTVTGPPGGTDTVIIREP and VTTTEYWSQSYATTLTITAPPGGTNSVII. Asparagine 2197 carries N-linked (GlcNAc...) asparagine glycosylation. 2 disordered regions span residues 2200-2235 and 2274-2494; these read VTHLPSSSSKPVDIPSSDVVTSTNDNSLTSLTGSEN and TTII…QQTT. Positions 2204-2233 are enriched in low complexity; that stretch reads PSSSSKPVDIPSSDVVTSTNDNSLTSLTGS. An N-linked (GlcNAc...) asparagine glycan is attached at asparagine 2281. Low complexity predominate over residues 2282 to 2296; sequence GSGKSKSGELSSTGS. Composition is skewed to polar residues over residues 2329–2420 and 2429–2452; these read STET…SATA and NGATTKGQDTAGGNSNGSTATTNI. N-linked (GlcNAc...) asparagine glycans are attached at residues asparagine 2444 and asparagine 2466. Composition is skewed to low complexity over residues 2453–2471 and 2482–2494; these read QGGNNEPGNQPGTNTTGEP and SISQPTTLSQQTT. Aspartate 2507 carries the GPI-anchor amidated aspartate lipid modification. A propeptide spans 2508 to 2530 (removed in mature form); sequence GSGSIVQHSGWLYVLLTAISIFF.

This sequence belongs to the ALS family. In terms of processing, N-glycosylated and O-glycosylated. The GPI-anchor is attached to the protein in the endoplasmic reticulum and serves to target the protein to the cell surface. There, the glucosamine-inositol phospholipid moiety is cleaved off and the GPI-modified mannoprotein is covalently attached via its lipidless GPI glycan remnant to the 1,6-beta-glucan of the outer cell wall layer.

It localises to the cell membrane. The protein resides in the secreted. It is found in the cell wall. In terms of biological role, cell surface adhesion protein which mediates both yeast-to-host tissue adherence and yeast aggregation. Plays an important role in the pathogenesis of C.albicans infections. This is Agglutinin-like protein 2 (ALS2) from Candida albicans (strain SC5314 / ATCC MYA-2876) (Yeast).